The following is a 233-amino-acid chain: Low affinity immunoglobulin gamma Fc region receptor III-B (233 aa).

Residues 1–16 (MWQLLLPTALLLLVSA) form the signal peptide. 2 Ig-like C2-type domains span residues 40–96 (KDSV…LSTL) and 121–179 (EDPI…VGSK). A disulfide bond links C47 and C89. 4 N-linked (GlcNAc...) asparagine glycosylation sites follow: N56, N63, N82, and N92. An intrachain disulfide couples C128 to C172. Residues N180 and N187 are each glycosylated (N-linked (GlcNAc...) asparagine). A lipid anchor (GPI-anchor amidated serine) is attached at S200. Residues 201-233 (SFSPPGYQVSFCLVMVLLFAVDTGLYFSVKTNI) constitute a propeptide, removed in mature form.

In terms of assembly, monomer. Interacts with INPP5D/SHIP1. In terms of processing, glycosylated. Glycosylation plays an inhibitory role in the interaction with IgG3. Post-translationally, the soluble form is produced by a proteolytic cleavage. In terms of tissue distribution, expressed specifically by polymorphonuclear leukocytes (neutrophils). Also expressed by stimulated eosinophils.

Its subcellular location is the cell membrane. The protein localises to the secreted. Receptor for the Fc region of immunoglobulins gamma. Low affinity receptor. Binds complexed or aggregated IgG and also monomeric IgG. Contrary to III-A, is not capable to mediate antibody-dependent cytotoxicity and phagocytosis. May serve as a trap for immune complexes in the peripheral circulation which does not activate neutrophils. The sequence is that of Low affinity immunoglobulin gamma Fc region receptor III-B (FCGR3B) from Homo sapiens (Human).